The sequence spans 203 residues: Pyrrolidone-carboxylate peptidase 1 (203 aa).

Active-site residues include E78, C141, and H165.

It belongs to the peptidase C15 family. As to quaternary structure, homotetramer.

It localises to the cytoplasm. The enzyme catalyses Release of an N-terminal pyroglutamyl group from a polypeptide, the second amino acid generally not being Pro.. In terms of biological role, removes 5-oxoproline from various penultimate amino acid residues except L-proline. This chain is Pyrrolidone-carboxylate peptidase 1, found in Caldanaerobacter subterraneus subsp. tengcongensis (strain DSM 15242 / JCM 11007 / NBRC 100824 / MB4) (Thermoanaerobacter tengcongensis).